The sequence spans 485 residues: Protein hunchback (485 aa).

Residues 1–77 (TSSTARKTPE…EEDDDIRTPK (77 aa)) are disordered. Positions 16 to 37 (QDQNQLLKTPIQTNGNQQSTFD) are enriched in polar residues. A compositionally biased stretch (acidic residues) spans 59–72 (ADVDDENDAEEDDD). 4 C2H2-type zinc fingers span residues 87–109 (YKCK…NRIH), 116–138 (LKCQ…LRNH), 144–166 (FQCK…MKSH), and 172–196 (YRCK…KYSH). 3 disordered regions span residues 229–270 (KDEG…PPSS), 318–361 (NGWQ…QVKH), and 398–422 (PKPV…EDDS). Over residues 257-270 (NFEQSQHVPTPPSS) the composition is skewed to polar residues. The segment covering 325–335 (NCNEEETPEKE) has biased composition (acidic residues). A compositionally biased stretch (polar residues) spans 345–358 (DLSSNPSTPSTVSQ). Residues 402-416 (QLQLPTSSTTTPLKT) are compositionally biased toward low complexity. 2 consecutive C2H2-type zinc fingers follow at residues 432–454 (YECK…MGYH) and 460–484 (FKCN…RDAH).

It belongs to the hunchback C2H2-type zinc-finger protein family.

The protein resides in the nucleus. Gap class segmentation protein that controls development of head structures. This chain is Protein hunchback (hb), found in Clogmia albipunctata (Mothmidge).